A 120-amino-acid polypeptide reads, in one-letter code: Putative ankyrin repeat protein RBE_1215 (120 aa).

ANK repeat units lie at residues Asp-22 to Ile-52 and Phe-59 to Val-88.

In Rickettsia bellii (strain RML369-C), this protein is Putative ankyrin repeat protein RBE_1215.